Here is a 230-residue protein sequence, read N- to C-terminus: Phosphoribosylaminoimidazole-succinocarboxamide synthase (230 aa).

The protein belongs to the SAICAR synthetase family.

It catalyses the reaction 5-amino-1-(5-phospho-D-ribosyl)imidazole-4-carboxylate + L-aspartate + ATP = (2S)-2-[5-amino-1-(5-phospho-beta-D-ribosyl)imidazole-4-carboxamido]succinate + ADP + phosphate + 2 H(+). It participates in purine metabolism; IMP biosynthesis via de novo pathway; 5-amino-1-(5-phospho-D-ribosyl)imidazole-4-carboxamide from 5-amino-1-(5-phospho-D-ribosyl)imidazole-4-carboxylate: step 1/2. The protein is Phosphoribosylaminoimidazole-succinocarboxamide synthase (purC) of Thermotoga maritima (strain ATCC 43589 / DSM 3109 / JCM 10099 / NBRC 100826 / MSB8).